Reading from the N-terminus, the 90-residue chain is Protein AF1q (90 aa).

The Nuclear export signal signature appears at 24-32 (LSELEGLGL). S84 is subject to Phosphoserine.

It belongs to the MLLT11 family. As to quaternary structure, interacts with HSPA8 and LAMP2 isoform A; the interaction may target MLLT11 for degradation via chaperone-mediated autophagy. Interacts with TCF7. Ubiquitinated, leading to degradation.

The protein localises to the nucleus. It is found in the cytoplasm. The protein resides in the cytoskeleton. Its subcellular location is the microtubule organizing center. It localises to the centrosome. In terms of biological role, cofactor for the transcription factor TCF7. Involved in regulation of lymphoid development by driving multipotent hematopoietic progenitor cells towards a T-cell fate. The polypeptide is Protein AF1q (MLLT11) (Pongo abelii (Sumatran orangutan)).